The following is a 146-amino-acid chain: Phospholipase A2, membrane associated (146 aa).

An N-terminal signal peptide occupies residues 1-21 (MKVLLLLAASIMAFGSIQVQG). 7 disulfide bridges follow: Cys-47/Cys-139, Cys-49/Cys-65, Cys-64/Cys-119, Cys-70/Cys-146, Cys-71/Cys-112, Cys-80/Cys-105, and Cys-98/Cys-110. Positions 48, 50, and 52 each coordinate Ca(2+). His-68 is an active-site residue. Residue Asp-69 coordinates Ca(2+). Asp-113 is an active-site residue.

It belongs to the phospholipase A2 family. Requires Ca(2+) as cofactor. Mainly in the Paneth cells adjacent to the stem population in the small intestines.

It localises to the secreted. It is found in the cell membrane. Its subcellular location is the mitochondrion outer membrane. The catalysed reaction is a 1,2-diacyl-sn-glycero-3-phosphoethanolamine + H2O = a 1-acyl-sn-glycero-3-phosphoethanolamine + a fatty acid + H(+). It catalyses the reaction 1-hexadecanoyl-2-(9Z-octadecenoyl)-sn-glycero-3-phosphoethanolamine + H2O = 1-hexadecanoyl-sn-glycero-3-phosphoethanolamine + (9Z)-octadecenoate + H(+). The enzyme catalyses 1-hexadecanoyl-2-(9Z,12Z-octadecadienoyl)-sn-glycero-3-phosphoethanolamine + H2O = 1-hexadecanoyl-sn-glycero-3-phosphoethanolamine + (9Z,12Z)-octadecadienoate + H(+). It carries out the reaction 1-hexadecanoyl-2-(5Z,8Z,11Z,14Z-eicosatetraenoyl)-sn-glycero-3-phosphoethanolamine + H2O = 1-hexadecanoyl-sn-glycero-3-phosphoethanolamine + (5Z,8Z,11Z,14Z)-eicosatetraenoate + H(+). The catalysed reaction is N-hexadecanoyl-1,2-di-(9Z-octadecenoyl)-sn-glycero-3-phosphoethanolamine + H2O = N-hexadecanoyl-1-(9Z-octadecenoyl)-sn-glycero-3-phosphoethanolamine + (9Z)-octadecenoate + H(+). It catalyses the reaction 1,2-dihexadecanoyl-sn-glycero-3-phospho-(1'-sn-glycerol) + H2O = 1-hexadecanoyl-sn-glycero-3-phospho-(1'-sn-glycerol) + hexadecanoate + H(+). The enzyme catalyses 1-hexadecanoyl-2-(9Z-octadecenoyl)-sn-glycero-3-phosphoglycerol + H2O = 1-hexadecanoyl-sn-glycero-3-phosphoglycerol + (9Z)-octadecenoate + H(+). It carries out the reaction 1-hexadecanoyl-2-(9Z-octadecenoyl)-sn-glycero-3-phospho-(1'-sn-glycerol) + H2O = 1-hexadecanoyl-sn-glycero-3-phospho-(1'-sn-glycerol) + (9Z)-octadecenoate + H(+). The catalysed reaction is a 1,2-diacyl-sn-glycero-3-phosphocholine + H2O = a 1-acyl-sn-glycero-3-phosphocholine + a fatty acid + H(+). It catalyses the reaction 1,2-dihexadecanoyl-sn-glycero-3-phosphocholine + H2O = 1-hexadecanoyl-sn-glycero-3-phosphocholine + hexadecanoate + H(+). The enzyme catalyses 1-hexadecanoyl-2-(9Z-octadecenoyl)-sn-glycero-3-phosphocholine + H2O = 1-hexadecanoyl-sn-glycero-3-phosphocholine + (9Z)-octadecenoate + H(+). It carries out the reaction 1-hexadecanoyl-2-(9Z,12Z-octadecadienoyl)-sn-glycero-3-phosphocholine + H2O = (9Z,12Z)-octadecadienoate + 1-hexadecanoyl-sn-glycero-3-phosphocholine + H(+). The catalysed reaction is 1-hexadecanoyl-2-(4Z,7Z,10Z,13Z,16Z,19Z-docosahexaenoyl)-sn-glycero-3-phosphocholine + H2O = (4Z,7Z,10Z,13Z,16Z,19Z)-docosahexaenoate + 1-hexadecanoyl-sn-glycero-3-phosphocholine + H(+). Secretory calcium-dependent phospholipase A2 that primarily targets extracellular phospholipids with implications in host antimicrobial defense, inflammatory response and tissue regeneration. Hydrolyzes the ester bond of the fatty acyl group attached at sn-2 position of phospholipids (phospholipase A2 activity) with preference for phosphatidylethanolamines and phosphatidylglycerols over phosphatidylcholines. Contributes to lipid remodeling of cellular membranes and generation of lipid mediators involved in pathogen clearance. Displays bactericidal activity against Gram-positive bacteria by directly hydrolyzing phospholipids of the bacterial membrane. Upon sterile inflammation, targets membrane phospholipids of extracellular mitochondria released from activated platelets, generating free unsaturated fatty acids such as arachidonate that is used by neighboring leukocytes to synthesize inflammatory eicosanoids such as leukotrienes. Simultaneously, by compromising mitochondrial membrane integrity, promotes the release in circulation of potent damage-associated molecular pattern molecules that activate the innate immune response. Plays a stem cell regulator role in the intestinal crypt. Within intracellular compartment mediates Paneth cell differentiation and its stem cell supporting functions by inhibiting Wnt signaling pathway in intestinal stem cell (ICS). Secreted in the intestinal lumen upon inflammation, acts in an autocrine way and promotes prostaglandin E2 synthesis that stimulates Wnt signaling pathway in ICS cells and tissue regeneration. May play a role in the biosynthesis of N-acyl ethanolamines that regulate energy metabolism and inflammation. Hydrolyzes N-acyl phosphatidylethanolamines to N-acyl lysophosphatidylethanolamines, which are further cleaved by a lysophospholipase D to release N-acyl ethanolamines. Independent of its catalytic activity, acts as a ligand for integrins. Binds to and activates integrins ITGAV:ITGB3, ITGA4:ITGB1 and ITGA5:ITGB1. Binds to a site (site 2) which is distinct from the classical ligand-binding site (site 1) and induces integrin conformational changes and enhanced ligand binding to site 1. Induces cell proliferation in an integrin-dependent manner. The sequence is that of Phospholipase A2, membrane associated (Pla2g2a) from Mus musculus (Mouse).